A 459-amino-acid polypeptide reads, in one-letter code: Elongation factor 1-alpha 2 (459 aa).

The 238-residue stretch at 5–242 (KTHINIVVIG…DCIIPPQRPT (238 aa)) folds into the tr-type G domain. Positions 14 to 21 (GHVDSGKS) are G1. Residues 70–74 (GITID) are G2. Positions 91–94 (DAPG) are G3. The interval 153–156 (NKMD) is G4. The G5 stretch occupies residues 194-196 (SGF). 2 positions are modified to 5-glutamyl glycerylphosphorylethanolamine: glutamate 301 and glutamate 374.

This sequence belongs to the TRAFAC class translation factor GTPase superfamily. Classic translation factor GTPase family. EF-Tu/EF-1A subfamily.

It localises to the cytoplasm. In terms of biological role, this protein promotes the GTP-dependent binding of aminoacyl-tRNA to the A-site of ribosomes during protein biosynthesis. This Oscheius tipulae protein is Elongation factor 1-alpha 2 (eft-2).